A 352-amino-acid polypeptide reads, in one-letter code: N-terminal EF-hand calcium-binding protein 1 (352 aa).

Phosphoserine is present on S4. EF-hand domains lie at 26–61 (KGMSIFLDILRRADKNDDGKLSFEEFKAYFADGVLS) and 60–95 (LSGEELHELFHTIDTHNTNNLDTEELCEYFSQHLGE). Positions 39, 41, 43, 45, and 50 each coordinate Ca(2+). The stretch at 135–163 (LLKETLNQLQSLQNSLECAMETTEEQTRQ) forms a coiled coil. The disordered stretch occupies residues 155–202 (ETTEEQTRQERQGPSKPEVLSIQWPGKRSSRRVQRHNSFSPNSPQFNV). The span at 190 to 202 (HNSFSPNSPQFNV) shows a compositional bias: polar residues. S192 and S197 each carry phosphoserine. Residues 209–275 (EEDNQWMTQI…EEFQLALKHY (67 aa)) adopt a coiled-coil conformation. The ABM domain maps to 252–340 (MLVQRQMSVT…LETPELTSTM (89 aa)).

Interacts with STX1. May interact with CPNE6.

Its subcellular location is the cytoplasm. This is N-terminal EF-hand calcium-binding protein 1 (Necab1) from Rattus norvegicus (Rat).